A 337-amino-acid chain; its full sequence is Protein SphX (337 aa).

An N-terminal signal peptide occupies residues 1 to 30 (MTTLKPALRRAAVLLPIAAVASSLFPIQEA).

Belongs to the PstS family. In terms of processing, the N-terminus is blocked.

It is found in the cell inner membrane. In terms of biological role, may be involved in the system for phosphate transport across the cytoplasmic membrane. In Synechococcus elongatus (strain ATCC 33912 / PCC 7942 / FACHB-805) (Anacystis nidulans R2), this protein is Protein SphX (sphX).